The primary structure comprises 424 residues: Enolase (424 aa).

Position 162 (Gln162) interacts with (2R)-2-phosphoglycerate. Glu204 (proton donor) is an active-site residue. Asp241, Glu284, and Asp311 together coordinate Mg(2+). (2R)-2-phosphoglycerate-binding residues include Lys336, Arg365, Ser366, and Lys387. Lys336 (proton acceptor) is an active-site residue.

This sequence belongs to the enolase family. Mg(2+) is required as a cofactor.

It localises to the cytoplasm. Its subcellular location is the secreted. The protein localises to the cell surface. It catalyses the reaction (2R)-2-phosphoglycerate = phosphoenolpyruvate + H2O. It participates in carbohydrate degradation; glycolysis; pyruvate from D-glyceraldehyde 3-phosphate: step 4/5. Catalyzes the reversible conversion of 2-phosphoglycerate (2-PG) into phosphoenolpyruvate (PEP). It is essential for the degradation of carbohydrates via glycolysis. This Rhizobium johnstonii (strain DSM 114642 / LMG 32736 / 3841) (Rhizobium leguminosarum bv. viciae) protein is Enolase.